The primary structure comprises 71 residues: U3-agatoxin-Ao1a (71 aa).

A signal peptide spans 1–20 (MKAVIFFCLLSVMVFTVIEA). The propeptide occupies 21–33 (VKEEGTKPAEAAR). 4 cysteine pairs are disulfide-bonded: Cys-35–Cys-51, Cys-42–Cys-56, Cys-50–Cys-66, and Cys-58–Cys-64. Ser-70 is subject to Serine amide.

It belongs to the neurotoxin 07 (Beta/delta-agtx) family. 01 (aga-2) subfamily. As to expression, expressed by the venom gland.

It is found in the secreted. In terms of biological role, insecticidal neurotoxin that modulates the insect Nav channel (DmNaV1/tipE (para/tipE)) in a unique manner, with both the activation and inactivation processes being affected. The voltage dependence of activation is shifted toward more hyperpolarized potentials (analogous to site 4 toxins) and a non-inactivating persistent sodium current is induced (site 3-like action). Interestingly, both effects take place in a voltage-dependent manner, producing a bell-shaped curve between -80 and 0 mV. Compared to beta/delta-agatoxin-1 to -3, this toxin appears to affect the insect sodium channel only weakly. This Agelena orientalis (Funnel-web spider) protein is U3-agatoxin-Ao1a.